A 512-amino-acid chain; its full sequence is Glycerol-3-phosphate dehydrogenase (512 aa).

16 to 44 (DVAVVGGGINGVGIAADAAGRGLSVFLCE) lines the FAD pocket.

Belongs to the FAD-dependent glycerol-3-phosphate dehydrogenase family. FAD is required as a cofactor.

It localises to the cytoplasm. The enzyme catalyses a quinone + sn-glycerol 3-phosphate = dihydroxyacetone phosphate + a quinol. In Pseudomonas aeruginosa (strain ATCC 15692 / DSM 22644 / CIP 104116 / JCM 14847 / LMG 12228 / 1C / PRS 101 / PAO1), this protein is Glycerol-3-phosphate dehydrogenase (glpD).